A 336-amino-acid chain; its full sequence is Potassium channel subfamily K member 1 (336 aa).

Residues 1-20 are Cytoplasmic-facing; the sequence is MLQSLAGSSCVRLVERHRSA. Residues 21–41 form a helical membrane-spanning segment; that stretch reads RCFGFLVLGYLLYLVFGAVVF. Over 42 to 103 the chain is Extracellular; sequence SSVELPYEDL…SNASGNWNWD (62 aa). N95 is a glycosylation site (N-linked (GlcNAc...) asparagine). The segment at residues 104–116 is an intramembrane region (helical); sequence FTSALFFASTVLS. The stretch at 117–122 is an intramembrane region; that stretch reads TTGYGH. The segment at 117–122 is selectivity filter 1; sequence TTGYGH. The Extracellular segment spans residues 123–132; it reads TVPLSDGGKA. A helical membrane pass occupies residues 133 to 156; it reads FCIIYSVIGIPFTLLFLTAVVQRI. Residues 157-181 are Cytoplasmic-facing; that stretch reads TVHVTRRPVLYFHIRWGFSKQVVAI. A helical membrane pass occupies residues 182 to 202; it reads VHAVLLGFVTVSCFFFIPAAV. Residues 203-211 lie on the Extracellular side of the membrane; it reads FSVLEDDWN. Residues 212 to 224 constitute an intramembrane region (helical); the sequence is FLESFYFCFISLS. The segment at 225 to 230 is selectivity filter 2; sequence TIGLGD. Residues 225–231 lie within the membrane without spanning it; that stretch reads TIGLGDY. Over 232 to 243 the chain is Extracellular; that stretch reads VPGEGYNQKFRE. A helical membrane pass occupies residues 244–267; sequence LYKIGITCYLLLGLIAMLVVLETF. Over 268–336 the chain is Cytoplasmic; it reads CELHELKKFR…SACMDGPANH (69 aa). K274 is covalently cross-linked (Glycyl lysine isopeptide (Lys-Gly) (interchain with G-Cter in SUMO)). The tract at residues 293 to 299 is important for intracellular retention in recycling endosomes; sequence IIEHDQL. A disordered region spans residues 315-336; sequence QKQNEPFVATQSSACMDGPANH. A Phosphoserine modification is found at S326.

The protein belongs to the two pore domain potassium channel (TC 1.A.1.8) family. Homodimer; disulfide-linked. Heterodimer with KCNK2; disulfide-linked. In astrocytes, forms mostly heterodimeric potassium channels with KCNK2, with only a minor proportion of functional channels containing homodimeric KCNK1. Interacts with KCNK3 and KCNK9, forming functional heterodimeric channels. Interacts with GNG4. Identified in a complex with PSD and ARF6; interacts only with PSD that is bound to ARF6. Interacts with UBE2I. Post-translationally, sumoylation is controversial. Sumoylated by UBE2I. Not sumoylated when expressed in xenopus oocytes or mammalian cells. Sumoylation inactivates the channel, but does not interfere with expression at the cell membrane. Sumoylation of a single subunit is sufficient to silence the dimeric channel. Sumoylation of KCNK1 is sufficient to silence heterodimeric channels formed by KCNK1 and KCNK3 or KCNK9. Desumoylated by SENP1; this activates the channel. Desumoylated by SENP1; this strongly increases halothane-mediated activation of heterodimeric channels formed with KCNK9. SENP1 treatment has no effect.

The protein localises to the cell membrane. It localises to the recycling endosome. Its subcellular location is the synaptic cell membrane. The protein resides in the cytoplasmic vesicle. It is found in the perikaryon. The protein localises to the cell projection. It localises to the dendrite. Its subcellular location is the apical cell membrane. It catalyses the reaction K(+)(in) = K(+)(out). The catalysed reaction is NH4(+)(in) = NH4(+)(out). It carries out the reaction Na(+)(in) = Na(+)(out). The enzyme catalyses Rb(+)(in) = Rb(+)(out). It catalyses the reaction Cs(+)(in) = Cs(+)(out). The catalysed reaction is Li(+)(in) = Li(+)(out). It carries out the reaction L-glutamate(out) = L-glutamate(in). The enzyme catalyses chloride(in) = chloride(out). Its function is as follows. Ion channel that contributes to passive transmembrane potassium transport and to the regulation of the resting membrane potential in brain astrocytes, but also in kidney and in other tissues. Forms dimeric channels through which potassium ions pass in accordance with their electrochemical gradient. The channel is selective for K(+) ions at physiological potassium concentrations and at neutral pH, but becomes permeable to Na(+) at subphysiological K(+) levels, and upon acidification of the extracellular medium. The homodimer has very low potassium channel activity, when expressed in heterologous systems, and can function as weakly inward rectifying potassium channel. Channel activity is modulated by activation of serotonin receptors. Heterodimeric channels containing KCNK1 and KCNK2 have much higher activity, and may represent the predominant form in astrocytes. Heterodimeric channels containing KCNK1 and KCNK3 or KCNK9 have much higher activity. Heterodimeric channels formed by KCNK1 and KCNK9 may contribute to halothane-sensitive currents. Mediates outward rectifying potassium currents in dentate gyrus granule cells and contributes to the regulation of their resting membrane potential. Contributes to the regulation of action potential firing in dentate gyrus granule cells and down-regulates their intrinsic excitability. In astrocytes, the heterodimer formed by KCNK1 and KCNK2 is required for rapid glutamate release in response to activation of G-protein coupled receptors, such as F2R and CNR1. Required for normal ion and water transport in the kidney. Contributes to the regulation of the resting membrane potential of pancreatic beta cells. The low channel activity of homodimeric KCNK1 may be due to sumoylation. The low channel activity may be due to rapid internalization from the cell membrane and retention in recycling endosomes. Permeable to monovalent cations with ion selectivity for K(+) &gt; Rb(+) &gt;&gt; NH4(+) &gt;&gt; Cs(+) = Na(+) = Li(+). The protein is Potassium channel subfamily K member 1 of Pongo abelii (Sumatran orangutan).